The primary structure comprises 335 residues: MAVVVEEGVVLNHGGEELVDLPPGFRFHPTDEEIITCYLKEKVLNSRFTAVAMGEADLNKCEPWDLPKRAKMGEKEFYFFCQRDRKYPTGMRTNRATESGYWKATGKDKEIFKGKGCLVGMKKTLVFYRGRAPKGEKTNWVMHEYRLEGKYSYYNLPKSARDEWVVCRVFHKNNPSTTTQPMTRIPVEDFTRMDSLENIDHLLDFSSLPPLIDPSFMSQTEQPNFKPINPPTYDISSPIQPHHFNSYQSIFNHQVFGSASGSTYNNNNEMIKMEQSLVSVSQETCLSSDVNANMTTTTEVSSGPVMKQEMGMMGMVNGSKSYEDLCDLRGDLWDF.

The 152-residue stretch at 21–172 folds into the NAC domain; sequence LPPGFRFHPT…EWVVCRVFHK (152 aa). A DNA-binding region spans residues 119–178; the sequence is VGMKKTLVFYRGRAPKGEKTNWVMHEYRLEGKYSYYNLPKSARDEWVVCRVFHKNNPSTT.

Its subcellular location is the nucleus. In terms of biological role, binds to the promoter regions of genes involved in chlorophyll catabolic processes, such as NYC1, SGR1, SGR2 and PAO. The polypeptide is NAC domain-containing protein 87 (Arabidopsis thaliana (Mouse-ear cress)).